The following is a 218-amino-acid chain: CTD kinase subunit gamma (218 aa).

The 137-residue stretch at 2–138 (DPFEGRMTFL…DAMATVEAHE (137 aa)) folds into the CID domain. The interval 137 to 157 (HEQASKSGDTSTSGAISKNDI) is disordered. Positions 141-152 (SKSGDTSTSGAI) are enriched in polar residues.

It belongs to the CTK3 family. In terms of assembly, CTDK-I consists of three subunits, ctk1/lsk1, ctk2/lsc1 and ctk3 (also called alpha, beta and gamma).

The protein resides in the cytoplasm. It localises to the nucleus. Functionally, subunit of the CTDK-I complex, which hyperphosphorylates the C-terminal heptapeptide repeat domain (CTD) of the largest RNA polymerase II subunit. As part of the CTDK-I complex, involved in RNA polymerase II transcriptional elongation and pre-mRNA 3'-end processing. Together with ctk2, required for ctk1/lsk1 CTD kinase activation. The sequence is that of CTD kinase subunit gamma from Schizosaccharomyces pombe (strain 972 / ATCC 24843) (Fission yeast).